The chain runs to 631 residues: Glutamyl-tRNA(Gln) amidotransferase subunit E (631 aa).

The protein belongs to the GatB/GatE family. GatE subfamily. In terms of assembly, heterodimer of GatD and GatE.

It catalyses the reaction L-glutamyl-tRNA(Gln) + L-glutamine + ATP + H2O = L-glutaminyl-tRNA(Gln) + L-glutamate + ADP + phosphate + H(+). Its function is as follows. Allows the formation of correctly charged Gln-tRNA(Gln) through the transamidation of misacylated Glu-tRNA(Gln) in organisms which lack glutaminyl-tRNA synthetase. The reaction takes place in the presence of glutamine and ATP through an activated gamma-phospho-Glu-tRNA(Gln). The GatDE system is specific for glutamate and does not act on aspartate. The chain is Glutamyl-tRNA(Gln) amidotransferase subunit E from Methanococcus maripaludis (strain C7 / ATCC BAA-1331).